We begin with the raw amino-acid sequence, 206 residues long: Small ribosomal subunit protein uS4 (206 aa).

The S4 RNA-binding domain maps to 96 to 156; sequence TRLDNVVYRM…EKSKTQARII (61 aa).

This sequence belongs to the universal ribosomal protein uS4 family. Part of the 30S ribosomal subunit. Contacts protein S5. The interaction surface between S4 and S5 is involved in control of translational fidelity.

In terms of biological role, one of the primary rRNA binding proteins, it binds directly to 16S rRNA where it nucleates assembly of the body of the 30S subunit. With S5 and S12 plays an important role in translational accuracy. In Colwellia psychrerythraea (strain 34H / ATCC BAA-681) (Vibrio psychroerythus), this protein is Small ribosomal subunit protein uS4.